The following is a 202-amino-acid chain: UPF0126 membrane protein YvgT (202 aa).

The next 6 helical transmembrane spans lie at 3-23 (WELL…IVAM), 26-46 (EYDI…GGAI), 63-83 (AYFQ…KLLL), 90-110 (GNLS…LYAV), 113-133 (GHPL…GGII), and 160-180 (IVGL…FVLV).

It belongs to the UPF0126 family.

The protein resides in the cell membrane. This chain is UPF0126 membrane protein YvgT (yvgT), found in Bacillus subtilis (strain 168).